The sequence spans 334 residues: MKILIEGYNKSIHKRDNQILIMEKEGELEKINIKKIDDITIIGKGSITFDALRLISENNVRLMSIDYFGKINYTLEYPSNENIFLRKQQYKTSENHKGLIIAREMIMSKMINQKSTIKTLNKNKKLENVKIFERNINEAIKQIGSLRFGERTDIEKSKMKMMGIEGSASVDYWLAVNELLPKEIGFFSRNNRHPNDITNASLNYAYAILASEVNKALVINGLDSYCGFLHFDRQKRTSLTFDLMEEFRQQLVDKVVFSLVNTKQISNDDLDKRNNSISLDVRKLIIGRVLDKVNSNINYEGENLSYAQIIDKQAKKIVNYLINGEKYTGFSLRW.

Residues E165, H230, and E245 each coordinate Mn(2+).

Belongs to the CRISPR-associated endonuclease Cas1 family. In terms of assembly, homodimer, forms a heterotetramer with a Cas2 homodimer. Mg(2+) serves as cofactor. Requires Mn(2+) as cofactor.

Its function is as follows. CRISPR (clustered regularly interspaced short palindromic repeat), is an adaptive immune system that provides protection against mobile genetic elements (viruses, transposable elements and conjugative plasmids). CRISPR clusters contain spacers, sequences complementary to antecedent mobile elements, and target invading nucleic acids. CRISPR clusters are transcribed and processed into CRISPR RNA (crRNA). Acts as a dsDNA endonuclease. Involved in the integration of spacer DNA into the CRISPR cassette. The protein is CRISPR-associated protein Cas1 3 of Methanobrevibacter ruminantium (strain ATCC 35063 / DSM 1093 / JCM 13430 / OCM 146 / M1) (Methanobacterium ruminantium).